The following is a 689-amino-acid chain: DNA ligase (689 aa).

NAD(+)-binding positions include 51–55, 100–101, and Glu129; these read DSEYD and SL. The active-site N6-AMP-lysine intermediate is the Lys131. NAD(+) is bound by residues Arg152, Glu189, Lys308, and Lys332. Zn(2+)-binding residues include Cys426, Cys429, Cys444, and Cys450. A BRCT domain is found at 609–689; the sequence is ADEQPLKGQT…ELLALLAANS (81 aa).

The protein belongs to the NAD-dependent DNA ligase family. LigA subfamily. Mg(2+) serves as cofactor. The cofactor is Mn(2+).

It catalyses the reaction NAD(+) + (deoxyribonucleotide)n-3'-hydroxyl + 5'-phospho-(deoxyribonucleotide)m = (deoxyribonucleotide)n+m + AMP + beta-nicotinamide D-nucleotide.. Its function is as follows. DNA ligase that catalyzes the formation of phosphodiester linkages between 5'-phosphoryl and 3'-hydroxyl groups in double-stranded DNA using NAD as a coenzyme and as the energy source for the reaction. It is essential for DNA replication and repair of damaged DNA. The chain is DNA ligase from Shewanella sp. (strain ANA-3).